The sequence spans 35 residues: Z-limacoditoxin(1)-Dv4 (35 aa).

The first 22 residues, 1-22 (MKKTFLPIFLVILLASYALGNP), serve as a signal peptide directing secretion. Q23 carries the post-translational modification Pyrrolidone carboxylic acid. The residue at position 32 (P32) is a Proline amide.

This sequence belongs to the limacoditoxin-1 (ACP-like) family. Expressed by the venom secretory cell of the spine. The spine is a cuticular structure containing a single large nucleated venom-secreting cell at its base. It is an independent unit capable of producing, storing and injecting venom. On the back of D.vulnerans caterpillars, spines are grouped together by 50 to 100 to form scoli, of which there are eight in D.vulnerans.

Its subcellular location is the secreted. In terms of biological role, potently activates insect GPCR. More precisely, it activates the ACP receptor (ACPR) from the mosquito A.aegypti (EC(50)=3.07 nM) with a potency comparable to that of the endogenous ligand. Has no activity on receptors of the closely related neuropeptides adipokinetic hormone and corazonin. In vivo, does not reveal any observable effects when injected into crickets (A.domesticus). Does not induce increase in intracellular calcium in mouse DRG neurons, suggesting that it does not induce pain. The polypeptide is Z-limacoditoxin(1)-Dv4 (Doratifera vulnerans (Mottled cup moth)).